The sequence spans 222 residues: Urease accessory protein UreF (222 aa).

It belongs to the UreF family. UreD, UreF and UreG form a complex that acts as a GTP-hydrolysis-dependent molecular chaperone, activating the urease apoprotein by helping to assemble the nickel containing metallocenter of UreC. The UreE protein probably delivers the nickel.

Its subcellular location is the cytoplasm. In terms of biological role, required for maturation of urease via the functional incorporation of the urease nickel metallocenter. This is Urease accessory protein UreF from Hahella chejuensis (strain KCTC 2396).